Consider the following 515-residue polypeptide: MTKRALISVSDKAGIVEFAQELKKLGWDIISTGGTKVTLDNAGVDTIAIDDVTGFPEMMDGRVKTLHPNIHGGLLARRDLHSHLQAAKDNNIELIDLVVVNLYPFKETILKPDVTYADAVENIDIGGPSMLRSAAKNHASVTVVVDPADYAVVLDELSANGETTYETRQRLAAKVYRHTASYDALIAEYFTAQVGETKPEKLTLTYDLKQPMRYGENPQQDADFYQKGLPTAYSIASAKQLNGKELSFNNIRDADAAIRIIRDFKDRPTVVALKHMNPCGIGQADDIETAWDYAYEADPVSIFGGIVVLNREVDAATAKKMHGVFLEIIIAPSYTDEALEILTTKKKNLRILELPFDAQDASEAEAEYTGVVGGLLVQNQDVVKESPADWQVVTKRQPTDTEVTALEFAWKAVKYVKSNGIIVTNDHMTLGVGPGQTNRVASVRIAIDQAKGRLDGAVLASDAFFPFADNVEEIAKAGIKAIIQPGGSVRDQESIEAADKYGLTMIFTGVRHFRH.

Positions 1–145 (MTKRALISVS…KNHASVTVVV (145 aa)) constitute an MGS-like domain.

It belongs to the PurH family.

It carries out the reaction (6R)-10-formyltetrahydrofolate + 5-amino-1-(5-phospho-beta-D-ribosyl)imidazole-4-carboxamide = 5-formamido-1-(5-phospho-D-ribosyl)imidazole-4-carboxamide + (6S)-5,6,7,8-tetrahydrofolate. The catalysed reaction is IMP + H2O = 5-formamido-1-(5-phospho-D-ribosyl)imidazole-4-carboxamide. Its pathway is purine metabolism; IMP biosynthesis via de novo pathway; 5-formamido-1-(5-phospho-D-ribosyl)imidazole-4-carboxamide from 5-amino-1-(5-phospho-D-ribosyl)imidazole-4-carboxamide (10-formyl THF route): step 1/1. It participates in purine metabolism; IMP biosynthesis via de novo pathway; IMP from 5-formamido-1-(5-phospho-D-ribosyl)imidazole-4-carboxamide: step 1/1. This chain is Bifunctional purine biosynthesis protein PurH, found in Streptococcus thermophilus (strain ATCC BAA-491 / LMD-9).